We begin with the raw amino-acid sequence, 390 residues long: MLLKRRLFIAASLFAMHLSPALAADAVSFAPQPPAIDAGAWVLMDYTTGQVLTAGNEHQQRNPASLTKLMTGYVVDRAIDSHRISPDDIVTVGRDAWAKDNPVFVGSSLMFLKEGDRVSVRDLSRGLIVDSGNDACVALADYIAGGQPQFVAMMNSYVKKLNLQDTHFETVHGLDAPGQHSSAYDLAVLSRAIIHGEPEFYHMYSEKSLTWNGITQQNRNGLLWDKTMHIDGLKTGHTSGAGFNLIASAVDGQRRLIAVVMGAKSSKGREEQARKLLQWGQQNFATVQILHSGKKVGSERIWYGDKEKIALGTEQDFWMALPKAEIPHIKAKYVLDRKELEAPIAAHQQVGEIELYDRDKLIAQWPLVTLESVGKGGMFSRLSDYFQHKA.

The N-terminal stretch at 1 to 23 is a signal peptide; sequence MLLKRRLFIAASLFAMHLSPALA. S65 (acyl-ester intermediate) is an active-site residue. Catalysis depends on K68, which acts as the Proton acceptor. S131 is an active-site residue. A substrate-binding site is contributed by K234.

Belongs to the peptidase S11 family.

Its subcellular location is the cell inner membrane. The catalysed reaction is Preferential cleavage: (Ac)2-L-Lys-D-Ala-|-D-Ala. Also transpeptidation of peptidyl-alanyl moieties that are N-acyl substituents of D-alanine.. Its pathway is cell wall biogenesis; peptidoglycan biosynthesis. Functionally, removes C-terminal D-alanyl residues from sugar-peptide cell wall precursors. This Salmonella typhimurium (strain LT2 / SGSC1412 / ATCC 700720) protein is D-alanyl-D-alanine carboxypeptidase DacD (dacD).